The sequence spans 500 residues: V-type proton ATPase subunit B (500 aa).

Belongs to the ATPase alpha/beta chains family. In terms of assembly, V-ATPase is a heteromultimeric enzyme composed of a peripheral catalytic V1 complex (main components: subunits A, B, C, D, E, and F) attached to an integral membrane V0 proton pore complex (main component: the proteolipid protein).

Its function is as follows. Non-catalytic subunit of the peripheral V1 complex of vacuolar ATPase. V-ATPase is responsible for acidifying a variety of intracellular compartments in eukaryotic cells. The chain is V-type proton ATPase subunit B from Cyanidium caldarium (Red alga).